Consider the following 497-residue polypeptide: Bifunctional protein GlmU (497 aa).

Positions 1–243 are pyrophosphorylase; sequence MTSSTTSSTD…SALVAGVNDR (243 aa). UDP-N-acetyl-alpha-D-glucosamine-binding positions include 16 to 19, K30, Q87, and 92 to 93; these read LAAG and GT. D118 contacts Mg(2+). 4 residues coordinate UDP-N-acetyl-alpha-D-glucosamine: G153, E168, N183, and N241. N241 serves as a coordination point for Mg(2+). The tract at residues 244-264 is linker; that stretch reads VQLAALGAELNRRIVTAHQRA. The tract at residues 265 to 497 is N-acetyltransferase; it reads GVTVIDPGST…LGHHDDSQGS (233 aa). Residues R346 and K364 each contribute to the UDP-N-acetyl-alpha-D-glucosamine site. Catalysis depends on H376, which acts as the Proton acceptor. The UDP-N-acetyl-alpha-D-glucosamine site is built by Y379 and N390. Acetyl-CoA is bound by residues A393, 399–400, S418, and A436; that span reads NY. Residues 473–497 form a disordered region; sequence ARAAERASGEAAEQALGHHDDSQGS. Basic and acidic residues predominate over residues 488-497; sequence LGHHDDSQGS.

This sequence in the N-terminal section; belongs to the N-acetylglucosamine-1-phosphate uridyltransferase family. In the C-terminal section; belongs to the transferase hexapeptide repeat family. In terms of assembly, homotrimer. The cofactor is Mg(2+).

It localises to the cytoplasm. The catalysed reaction is alpha-D-glucosamine 1-phosphate + acetyl-CoA = N-acetyl-alpha-D-glucosamine 1-phosphate + CoA + H(+). The enzyme catalyses N-acetyl-alpha-D-glucosamine 1-phosphate + UTP + H(+) = UDP-N-acetyl-alpha-D-glucosamine + diphosphate. It participates in nucleotide-sugar biosynthesis; UDP-N-acetyl-alpha-D-glucosamine biosynthesis; N-acetyl-alpha-D-glucosamine 1-phosphate from alpha-D-glucosamine 6-phosphate (route II): step 2/2. The protein operates within nucleotide-sugar biosynthesis; UDP-N-acetyl-alpha-D-glucosamine biosynthesis; UDP-N-acetyl-alpha-D-glucosamine from N-acetyl-alpha-D-glucosamine 1-phosphate: step 1/1. Its pathway is bacterial outer membrane biogenesis; LPS lipid A biosynthesis. In terms of biological role, catalyzes the last two sequential reactions in the de novo biosynthetic pathway for UDP-N-acetylglucosamine (UDP-GlcNAc). The C-terminal domain catalyzes the transfer of acetyl group from acetyl coenzyme A to glucosamine-1-phosphate (GlcN-1-P) to produce N-acetylglucosamine-1-phosphate (GlcNAc-1-P), which is converted into UDP-GlcNAc by the transfer of uridine 5-monophosphate (from uridine 5-triphosphate), a reaction catalyzed by the N-terminal domain. This Mycobacterium sp. (strain JLS) protein is Bifunctional protein GlmU.